Reading from the N-terminus, the 432-residue chain is UDP-N-acetylglucosamine 1-carboxyvinyltransferase (432 aa).

22–23 (KN) lines the phosphoenolpyruvate pocket. R92 contacts UDP-N-acetyl-alpha-D-glucosamine. Residue C116 is the Proton donor of the active site. C116 is subject to 2-(S-cysteinyl)pyruvic acid O-phosphothioketal. Residues 121-125 (RPVDQ), D307, and I329 each bind UDP-N-acetyl-alpha-D-glucosamine.

Belongs to the EPSP synthase family. MurA subfamily.

Its subcellular location is the cytoplasm. The enzyme catalyses phosphoenolpyruvate + UDP-N-acetyl-alpha-D-glucosamine = UDP-N-acetyl-3-O-(1-carboxyvinyl)-alpha-D-glucosamine + phosphate. The protein operates within cell wall biogenesis; peptidoglycan biosynthesis. Its function is as follows. Cell wall formation. Adds enolpyruvyl to UDP-N-acetylglucosamine. The protein is UDP-N-acetylglucosamine 1-carboxyvinyltransferase of Psychrobacter sp. (strain PRwf-1).